A 455-amino-acid polypeptide reads, in one-letter code: Golgi pH regulator (455 aa).

A run of 4 helical transmembrane segments spans residues 46–66, 79–99, 111–131, and 150–170; these read ITFAFSCTMFELIIFEILGAL, LYVILLVLIFVVPFYIGYFVV, LFACVVWFTFMYFFWKLGDPF, and VGVIGVTLMALLSGFGAVNCP. 2 N-linked (GlcNAc...) asparagine glycosylation sites follow: Asn180 and Asn243. 4 helical membrane-spanning segments follow: residues 290–310, 343–363, 378–398, and 425–445; these read GYFFSIYCVWKIFMATINIVF, ISFILVGIIIVTSIRGLLITL, VIVLVLAQIMGMYFVSSVLLM, and WFDVIFLVSALSSILFLYLAH.

It belongs to the Golgi pH regulator (TC 1.A.38) family. In terms of assembly, homotrimer.

The protein localises to the golgi apparatus membrane. The catalysed reaction is iodide(out) = iodide(in). The enzyme catalyses chloride(in) = chloride(out). It carries out the reaction bromide(in) = bromide(out). It catalyses the reaction fluoride(in) = fluoride(out). Its function is as follows. Voltage-gated channel that enables the transfer of anions such as iodide, chloride, bromide and fluoride which may function in counter-ion conductance and participates in Golgi acidification. This chain is Golgi pH regulator, found in Salmo salar (Atlantic salmon).